The chain runs to 211 residues: Shikimate kinase (211 aa).

A disordered region spans residues 1–23 (MNASANLCAASDNDPQPGDQEAA). 50-55 (GAGKTT) lines the ATP pocket. Threonine 54 contributes to the Mg(2+) binding site. Substrate contacts are provided by aspartate 72, arginine 96, and glycine 118. An ATP-binding site is contributed by arginine 156. A substrate-binding site is contributed by arginine 175.

This sequence belongs to the shikimate kinase family. As to quaternary structure, monomer. It depends on Mg(2+) as a cofactor.

It localises to the cytoplasm. It catalyses the reaction shikimate + ATP = 3-phosphoshikimate + ADP + H(+). It participates in metabolic intermediate biosynthesis; chorismate biosynthesis; chorismate from D-erythrose 4-phosphate and phosphoenolpyruvate: step 5/7. Catalyzes the specific phosphorylation of the 3-hydroxyl group of shikimic acid using ATP as a cosubstrate. The polypeptide is Shikimate kinase (Bordetella bronchiseptica (strain ATCC BAA-588 / NCTC 13252 / RB50) (Alcaligenes bronchisepticus)).